We begin with the raw amino-acid sequence, 134 residues long: S-protein homolog 31 (134 aa).

The N-terminal stretch at 1–21 (MKILSVFLFVFSIYIFGHVSG) is a signal peptide. Residue N87 is glycosylated (N-linked (GlcNAc...) asparagine).

It belongs to the plant self-incompatibility (S1) protein family.

It localises to the secreted. The chain is S-protein homolog 31 from Arabidopsis thaliana (Mouse-ear cress).